The primary structure comprises 111 residues: Large ribosomal subunit protein uL22 (111 aa).

The protein belongs to the universal ribosomal protein uL22 family. As to quaternary structure, part of the 50S ribosomal subunit.

Its function is as follows. This protein binds specifically to 23S rRNA; its binding is stimulated by other ribosomal proteins, e.g. L4, L17, and L20. It is important during the early stages of 50S assembly. It makes multiple contacts with different domains of the 23S rRNA in the assembled 50S subunit and ribosome. Functionally, the globular domain of the protein is located near the polypeptide exit tunnel on the outside of the subunit, while an extended beta-hairpin is found that lines the wall of the exit tunnel in the center of the 70S ribosome. In Pelobacter propionicus (strain DSM 2379 / NBRC 103807 / OttBd1), this protein is Large ribosomal subunit protein uL22.